Consider the following 1047-residue polypeptide: Suppression of tumorigenicity 18 protein (1047 aa).

Disordered stretches follow at residues 41 to 92 (TAED…HSTA), 168 to 221 (FLIH…VPKY), and 251 to 286 (DSET…SESL). Basic residues predominate over residues 52 to 65 (NKRKSLLMKPRHYS). Residues 171–181 (HSDDGRDKIDD) show a composition bias toward basic and acidic residues. 2 CCHHC-type zinc fingers span residues 359 to 402 (PRPE…PLEI) and 403 to 446 (LAMH…KLAM). 8 residues coordinate Zn(2+): Cys368, Cys373, His386, Cys392, Cys412, Cys417, His430, and Cys436. Disordered regions lie at residues 523-563 (GRKT…SYSY) and 672-710 (YSKT…SPKP). A compositionally biased stretch (polar residues) spans 550 to 563 (AHTQSPGRASSYSY). The segment covering 677-687 (GKTEEEKEKDP) has biased composition (basic and acidic residues). 4 CCHHC-type zinc fingers span residues 715-758 (RDLK…LKSL), 759-802 (MAAN…GVKM), 807-850 (EEKE…QKEN), and 860-903 (KLNK…IKKG). Zn(2+) is bound by residues Cys724, Cys729, His742, Cys748, Cys768, Cys773, His786, Cys792, Cys816, Cys821, His834, Cys840, Cys869, Cys874, His887, and Cys893. The stretch at 920–992 (IESDEEIRHL…AGLSQALISS (73 aa)) forms a coiled coil.

It belongs to the MYT1 family. In terms of tissue distribution, detected at low levels in heart, liver, kidney, skeletal muscle, pancreas, testis, ovary and prostate. Detected at even lower levels in mammary epithelial cells and breast cancer cells.

It localises to the nucleus. Repressor that binds to DNA sequences containing a bipartite element consisting of a direct repeat of the sequence 5'-AAAGTTT-3' separated by 2-9 nucleotides. Represses basal transcription activity from target promoters. Inhibits colony formation in cultured breast cancer cells. The sequence is that of Suppression of tumorigenicity 18 protein (ST18) from Homo sapiens (Human).